The sequence spans 30 residues: Superoxide dismutase [Cu-Zn] 1 (30 aa).

The protein belongs to the Cu-Zn superoxide dismutase family. Cu cation serves as cofactor. The cofactor is Zn(2+). In terms of tissue distribution, expressed in fruits, leaves and pollen grains.

The protein resides in the cytoplasm. It is found in the endoplasmic reticulum. The catalysed reaction is 2 superoxide + 2 H(+) = H2O2 + O2. Its activity is regulated as follows. Inhibited by KCN and H(2)O(2). Its function is as follows. Destroys radicals which are normally produced within the cells and which are toxic to biological systems. Probably involved in the protection against oxidative stress during pollen development. This chain is Superoxide dismutase [Cu-Zn] 1, found in Olea europaea (Common olive).